Here is a 414-residue protein sequence, read N- to C-terminus: Ribulose bisphosphate carboxylase large chain (414 aa).

2 residues coordinate substrate: Asn101 and Thr151. Catalysis depends on Lys153, which acts as the Proton acceptor. A substrate-binding site is contributed by Lys155. Lys179, Asp181, and Glu182 together coordinate Mg(2+). Lys179 carries the post-translational modification N6-carboxylysine. His272 functions as the Proton acceptor in the catalytic mechanism. Residues Arg273, His305, and Ser357 each contribute to the substrate site.

The protein belongs to the RuBisCO large chain family. Type I subfamily. In terms of assembly, heterohexadecamer of 8 large chains and 8 small chains; disulfide-linked. The disulfide link is formed within the large subunit homodimers. Requires Mg(2+) as cofactor. Post-translationally, the disulfide bond which can form in the large chain dimeric partners within the hexadecamer appears to be associated with oxidative stress and protein turnover.

The protein localises to the plastid. Its subcellular location is the chloroplast. It carries out the reaction 2 (2R)-3-phosphoglycerate + 2 H(+) = D-ribulose 1,5-bisphosphate + CO2 + H2O. The catalysed reaction is D-ribulose 1,5-bisphosphate + O2 = 2-phosphoglycolate + (2R)-3-phosphoglycerate + 2 H(+). In terms of biological role, ruBisCO catalyzes two reactions: the carboxylation of D-ribulose 1,5-bisphosphate, the primary event in carbon dioxide fixation, as well as the oxidative fragmentation of the pentose substrate in the photorespiration process. Both reactions occur simultaneously and in competition at the same active site. The chain is Ribulose bisphosphate carboxylase large chain (rbcL) from Onychium japonicum (Japanese claw fern).